Here is a 368-residue protein sequence, read N- to C-terminus: Phosphate acyltransferase (368 aa).

The disordered stretch occupies residues 337-368; the sequence is LGEGEHNAGGAGHASPAAGHHAEPSAAQSSKA. Residues 349–368 show a composition bias toward low complexity; sequence HASPAAGHHAEPSAAQSSKA.

Belongs to the PlsX family. As to quaternary structure, homodimer. Probably interacts with PlsY.

It localises to the cytoplasm. The catalysed reaction is a fatty acyl-[ACP] + phosphate = an acyl phosphate + holo-[ACP]. Its pathway is lipid metabolism; phospholipid metabolism. Catalyzes the reversible formation of acyl-phosphate (acyl-PO(4)) from acyl-[acyl-carrier-protein] (acyl-ACP). This enzyme utilizes acyl-ACP as fatty acyl donor, but not acyl-CoA. The protein is Phosphate acyltransferase of Burkholderia lata (strain ATCC 17760 / DSM 23089 / LMG 22485 / NCIMB 9086 / R18194 / 383).